Consider the following 582-residue polypeptide: Arginine--tRNA ligase (582 aa).

The short motif at Ala-136 to His-146 is the 'HIGH' region element.

This sequence belongs to the class-I aminoacyl-tRNA synthetase family. Monomer.

It localises to the cytoplasm. The catalysed reaction is tRNA(Arg) + L-arginine + ATP = L-arginyl-tRNA(Arg) + AMP + diphosphate. The protein is Arginine--tRNA ligase of Novosphingobium aromaticivorans (strain ATCC 700278 / DSM 12444 / CCUG 56034 / CIP 105152 / NBRC 16084 / F199).